We begin with the raw amino-acid sequence, 95 residues long: Feather keratin B-4 (95 aa).

S1 carries the N-acetylserine modification.

Belongs to the avian keratin family. In terms of assembly, the avian keratins (F-ker, S-ker, C-ker and B-ker) are a complex mixture of very similar polypeptides.

The chain is Feather keratin B-4 from Anas platyrhynchos (Mallard).